We begin with the raw amino-acid sequence, 317 residues long: Glutathione synthetase (317 aa).

The ATP-grasp domain maps to 126–311 (KFFATQFTQC…IGDKLMDAIA (186 aa)). 152–208 (AAEHRDIILKPLDGMGGSSIFRHREGDPNLSVILETLTQHGSQQIMAQRYLPEIKDG) serves as a coordination point for ATP. The Mg(2+) site is built by Glu-282 and Asn-284.

Belongs to the prokaryotic GSH synthase family. It depends on Mg(2+) as a cofactor. Mn(2+) is required as a cofactor.

It carries out the reaction gamma-L-glutamyl-L-cysteine + glycine + ATP = glutathione + ADP + phosphate + H(+). The protein operates within sulfur metabolism; glutathione biosynthesis; glutathione from L-cysteine and L-glutamate: step 2/2. The protein is Glutathione synthetase of Pseudomonas aeruginosa (strain ATCC 15692 / DSM 22644 / CIP 104116 / JCM 14847 / LMG 12228 / 1C / PRS 101 / PAO1).